Reading from the N-terminus, the 291-residue chain is Tyrosine isonitrile desaturase (291 aa).

H110, D112, and H259 together coordinate Fe cation.

This sequence belongs to the TfdA dioxygenase family. As to quaternary structure, homotrimer in solution. Fe(2+) is required as a cofactor.

It carries out the reaction (2S)-3-(4-hydroxyphenyl)-2-isocyanopropanoate + 2-oxoglutarate + O2 = (2E)-3-(4-hydroxyphenyl)-2-isocyanoprop-2-enoate + succinate + CO2 + H2O. Its function is as follows. Involved in the biosynthesis of paerucumarin, a cyclized isocyano derivative of tyrosine. Catalyzes the 2-oxoglutarate-dependent oxidation of tyrosine isonitrile. This is Tyrosine isonitrile desaturase from Pseudomonas aeruginosa (strain ATCC 15692 / DSM 22644 / CIP 104116 / JCM 14847 / LMG 12228 / 1C / PRS 101 / PAO1).